The chain runs to 702 residues: Ribosomal RNA large subunit methyltransferase K/L (702 aa).

One can recognise a THUMP domain in the interval 43 to 154 (LIYQSLMWSR…KETASIALDL (112 aa)).

This sequence belongs to the methyltransferase superfamily. RlmKL family.

The protein resides in the cytoplasm. The enzyme catalyses guanosine(2445) in 23S rRNA + S-adenosyl-L-methionine = N(2)-methylguanosine(2445) in 23S rRNA + S-adenosyl-L-homocysteine + H(+). It catalyses the reaction guanosine(2069) in 23S rRNA + S-adenosyl-L-methionine = N(2)-methylguanosine(2069) in 23S rRNA + S-adenosyl-L-homocysteine + H(+). Its function is as follows. Specifically methylates the guanine in position 2445 (m2G2445) and the guanine in position 2069 (m7G2069) of 23S rRNA. The sequence is that of Ribosomal RNA large subunit methyltransferase K/L from Salmonella schwarzengrund (strain CVM19633).